The following is a 146-amino-acid chain: Hemoglobin subunit theta (146 aa).

The 145-residue stretch at 2-146 (HFTAEEKSVI…VATALAHKYH (145 aa)) folds into the Globin domain. Positions 63 and 92 each coordinate heme b.

This sequence belongs to the globin family.

In Sus scrofa (Pig), this protein is Hemoglobin subunit theta.